We begin with the raw amino-acid sequence, 109 residues long: Glutaredoxin-8 (109 aa).

Residues 5–109 enclose the Glutaredoxin domain; that stretch reads VTKAEEMIKS…EELTKIGLLP (105 aa). C25 and C28 are joined by a disulfide.

This sequence belongs to the glutaredoxin family. In terms of assembly, monomer.

It localises to the cytoplasm. In terms of biological role, glutathione-dependent oxidoreductase with lower activity compared to the other members of the glutaredoxin family. The disulfide bond functions as an electron carrier in the glutathione-dependent synthesis of deoxyribonucleotides by the enzyme ribonucleotide reductase. This chain is Glutaredoxin-8 (GRX8), found in Saccharomyces cerevisiae (strain ATCC 204508 / S288c) (Baker's yeast).